The sequence spans 204 residues: MPASQRLRLICGVDEAGRGPLCGPVVAAAVILDPARPIDGLADSKKLTERARDRLAPLIRERALAWAVAEASVEEIDRLNILHATMLAMQRAVSALSVLPGEVLIDGNRCPTLAVPARAVVGGDASEPAISAASILAKTVRDAGMKALHEQYPHYGLADHKGYPTAGHLAALRRHGIADFYRRSFGPVRELLQNPPLWVEEESA.

In terms of domain architecture, RNase H type-2 spans 8 to 197 (RLICGVDEAG…VRELLQNPPL (190 aa)). The a divalent metal cation site is built by aspartate 14, glutamate 15, and aspartate 106.

The protein belongs to the RNase HII family. Mn(2+) is required as a cofactor. It depends on Mg(2+) as a cofactor.

The protein localises to the cytoplasm. It catalyses the reaction Endonucleolytic cleavage to 5'-phosphomonoester.. In terms of biological role, endonuclease that specifically degrades the RNA of RNA-DNA hybrids. The chain is Ribonuclease HII from Azoarcus sp. (strain BH72).